Reading from the N-terminus, the 627-residue chain is 5-aminolevulinate synthase, non-specific, mitochondrial (627 aa).

The transit peptide at 1-58 (MDVIVRRCPFLARVPQAFFQQSKKSLAVYAQRCPFMMELASKPMAPSLARALCSSSSS) directs the protein to the mitochondrion. Positions 204, 321, and 340 each coordinate substrate. Serine 373, histidine 401, and threonine 429 together coordinate pyridoxal 5'-phosphate. Lysine 432 is a catalytic residue. Position 432 is an N6-(pyridoxal phosphate)lysine (lysine 432). The pyridoxal 5'-phosphate site is built by threonine 461 and threonine 462. Residue threonine 549 participates in substrate binding.

Belongs to the class-II pyridoxal-phosphate-dependent aminotransferase family. In terms of assembly, homodimer. The cofactor is pyridoxal 5'-phosphate.

It is found in the mitochondrion inner membrane. It catalyses the reaction succinyl-CoA + glycine + H(+) = 5-aminolevulinate + CO2 + CoA. It functions in the pathway porphyrin-containing compound metabolism; protoporphyrin-IX biosynthesis; 5-aminolevulinate from glycine: step 1/1. In terms of biological role, catalyzes the pyridoxal 5'-phosphate (PLP)-dependent condensation of succinyl-CoA and glycine to form aminolevulinic acid (ALA), with CoA and CO2 as by-products. This Opsanus tau (Oyster toadfish) protein is 5-aminolevulinate synthase, non-specific, mitochondrial (alas1).